The chain runs to 993 residues: DNA mismatch repair protein msh3 (993 aa).

Residues 97–211 (TKQKSVFTPL…RRVARVLTKG (115 aa)) are mispair-binding domain. Residue 759–766 (GPNMGGKS) coordinates ATP.

The protein belongs to the DNA mismatch repair MutS family. MSH3 subfamily. As to quaternary structure, heterodimer consisting of msh2-msh3 (MutS beta). Forms a ternary complex with MutL alpha (mlh1-pms1).

The protein localises to the nucleus. In terms of biological role, component of the post-replicative DNA mismatch repair system (MMR). Heterodimerizes with msh2 to form MutS beta, which binds to DNA mismatches thereby initiating DNA repair. Msh3 provides substrate-binding and substrate specificity to the complex. When bound, the MutS beta heterodimer bends the DNA helix and shields approximately 20 base pairs. Acts mainly to repair insertion-deletion loops (IDLs) from 2 to 13 nucleotides in size, but can also repair base-base and single insertion-deletion mismatches that occur during replication. After mismatch binding, forms a ternary complex with the MutL alpha heterodimer, which is thought to be responsible for directing the downstream MMR events, including strand discrimination, excision, and resynthesis. ATP binding and hydrolysis play a pivotal role in mismatch repair functions. Involved in termination of copy-synthesis during mating-type switching. In Schizosaccharomyces pombe (strain 972 / ATCC 24843) (Fission yeast), this protein is DNA mismatch repair protein msh3 (msh3).